We begin with the raw amino-acid sequence, 316 residues long: SHC-transforming protein homolog 1 (316 aa).

The 143-residue stretch at 16–158 (GVSLSATYLG…LIDVLTTAIN (143 aa)) folds into the PID domain. The region spanning 211–307 (WYHGNLSRED…ETSLNLIRPV (97 aa)) is the SH2 domain. Residues 292 to 316 (SEGRDRETSLNLIRPVPCPGSDDIE) are disordered.

In terms of assembly, interacts (via PID domain) with daf-2 (via cytoplasmic domain). Interacts with mek-1; the interaction is independent of mek-1 catalytic activity and is constitutive. Interacts (via N-terminus) with mlk-1 (via NPQY motif when phosphorylated on tyrosine residue). Does not interact with jkk-1 or sek-1. Interacts (via SH2 domain) with svh-2. Interacts with svh-4. Expressed in hypodermis, intestine, head and tail neurons, pharynx, gonads, vulva and body muscles.

The protein localises to the cytoplasm. It localises to the nucleus. It is found in the cell membrane. In terms of biological role, scaffold protein which plays an important role in the activation of the JNK pathway composed of mlk-1, mek-1 and kgb-1; by bringing together mek-1 and mlk-1, promotes mlk-1-mediated phosphorylation and activation of mek-1 which in turn phosphorylates kgb-1. In addition, negatively modulates the activation of the insulin/IGF-1-like signaling (IIS) probably by inhibiting the insulin receptor daf-2. Positively regulates the activity of the transcription factor daf-16/FOXO by both inhibiting IIS and activating the JNK pathway. Plays a role in maintaining gonadal basement membrane integrity through activation of the JNK pathway components mek-1 and jnk-1. Involved in the response to several environmental stresses including heavy metal ions (Cu(2+) and Cd(2+)), heat, oxidative and protein misfolding (ER) stresses. Plays a role in gonad and germline development following the L1 diapause. Plays a role in life span and egg laying. Plays a role in axon regeneration after injury. In Caenorhabditis elegans, this protein is SHC-transforming protein homolog 1.